The chain runs to 834 residues: Probable phosphoenolpyruvate synthase (834 aa).

The Tele-phosphohistidine intermediate role is filled by His447. Residues Arg550, Arg598, Glu699, Gly720, Ser721, Asn722, and Asp723 each coordinate substrate. Glu699 lines the Mg(2+) pocket. Asp723 contacts Mg(2+). The Proton donor role is filled by Cys772.

This sequence belongs to the PEP-utilizing enzyme family. As to quaternary structure, homooligomer. Forms a large complex of about 2000 kDa. Requires Mg(2+) as cofactor. Post-translationally, the N-terminus is blocked.

It catalyses the reaction pyruvate + ATP + H2O = phosphoenolpyruvate + AMP + phosphate + 2 H(+). It functions in the pathway carbohydrate biosynthesis; gluconeogenesis. Functionally, catalyzes the phosphorylation of pyruvate to phosphoenolpyruvate. The polypeptide is Probable phosphoenolpyruvate synthase (ppsA) (Staphylothermus marinus (strain ATCC 43588 / DSM 3639 / JCM 9404 / F1)).